Consider the following 280-residue polypeptide: Urease accessory protein UreD (280 aa).

This sequence belongs to the UreD family. As to quaternary structure, ureD, UreF and UreG form a complex that acts as a GTP-hydrolysis-dependent molecular chaperone, activating the urease apoprotein by helping to assemble the nickel containing metallocenter of UreC. The UreE protein probably delivers the nickel.

It localises to the cytoplasm. Its function is as follows. Required for maturation of urease via the functional incorporation of the urease nickel metallocenter. This Pseudomonas aeruginosa (strain ATCC 15692 / DSM 22644 / CIP 104116 / JCM 14847 / LMG 12228 / 1C / PRS 101 / PAO1) protein is Urease accessory protein UreD.